We begin with the raw amino-acid sequence, 375 residues long: Aminomethyltransferase (375 aa).

The protein belongs to the GcvT family. The glycine cleavage system is composed of four proteins: P, T, L and H.

It carries out the reaction N(6)-[(R)-S(8)-aminomethyldihydrolipoyl]-L-lysyl-[protein] + (6S)-5,6,7,8-tetrahydrofolate = N(6)-[(R)-dihydrolipoyl]-L-lysyl-[protein] + (6R)-5,10-methylene-5,6,7,8-tetrahydrofolate + NH4(+). The glycine cleavage system catalyzes the degradation of glycine. The chain is Aminomethyltransferase from Cupriavidus metallidurans (strain ATCC 43123 / DSM 2839 / NBRC 102507 / CH34) (Ralstonia metallidurans).